The following is a 713-amino-acid chain: Meiotic activator RIM4 (713 aa).

Residues 1–90 (MKTEISTADS…TSTSTESRGR (90 aa)) form a disordered region. Over residues 21-31 (ADSELVIREDI) the composition is skewed to basic and acidic residues. A compositionally biased stretch (acidic residues) spans 50–71 (GEDSDTDSDNFLQDPEDDVDEE). Residues 74-90 (GRGTVTTTSTSTESRGR) are compositionally biased toward low complexity. Positions 93–172 (SCIFVASLAA…RRLRCEPAKV (80 aa)) constitute an RRM 1 domain. The interval 276-337 (HQNNGIINND…SDGIYDDEDK (62 aa)) is disordered. Residues 278 to 298 (NNGIINNDGSNNNDNNNSNNN) show a composition bias toward low complexity. Residues 299–327 (NREDSRRNGDVIEEECGHVHGSDSEEKLT) show a composition bias toward basic and acidic residues. The region spanning 346–420 (RSIFVGQLDK…KTMHVQYKEV (75 aa)) is the RRM 2 domain. A disordered region spans residues 524 to 609 (KSMPNSWSSP…KRYARRSSYG (86 aa)). S525 carries the phosphoserine modification. Residues 526 to 546 (MPNSWSSPSSKSVNSENESVN) show a composition bias toward low complexity. The segment covering 563-574 (GRYNAANSFTTY) has biased composition (polar residues). Low complexity predominate over residues 575-594 (NNSSAGNSNNNNNNNNSNSN).

Polyubiquitinated by RSP5.

Its function is as follows. Positive regulator of sporulation-specific genes and of sporulation. Required for premeiotic DNA synthesis and meiotic chromosomal segregation. May act in a nutritional signaling pathway. The protein is Meiotic activator RIM4 (RIM4) of Saccharomyces cerevisiae (strain ATCC 204508 / S288c) (Baker's yeast).